Consider the following 512-residue polypeptide: ATP synthase subunit alpha (512 aa).

169 to 176 (GDRQTGKT) is a binding site for ATP.

It belongs to the ATPase alpha/beta chains family. As to quaternary structure, F-type ATPases have 2 components, CF(1) - the catalytic core - and CF(0) - the membrane proton channel. CF(1) has five subunits: alpha(3), beta(3), gamma(1), delta(1), epsilon(1). CF(0) has three main subunits: a(1), b(2) and c(9-12). The alpha and beta chains form an alternating ring which encloses part of the gamma chain. CF(1) is attached to CF(0) by a central stalk formed by the gamma and epsilon chains, while a peripheral stalk is formed by the delta and b chains.

It is found in the cell inner membrane. The catalysed reaction is ATP + H2O + 4 H(+)(in) = ADP + phosphate + 5 H(+)(out). In terms of biological role, produces ATP from ADP in the presence of a proton gradient across the membrane. The alpha chain is a regulatory subunit. This chain is ATP synthase subunit alpha, found in Leptothrix cholodnii (strain ATCC 51168 / LMG 8142 / SP-6) (Leptothrix discophora (strain SP-6)).